Here is a 385-residue protein sequence, read N- to C-terminus: Protein pelota homolog (385 aa).

A Glycyl lysine isopeptide (Lys-Gly) (interchain with G-Cter in SUMO2) cross-link involves residue Lys-162. A phosphoserine mark is found at Ser-374, Ser-380, Ser-381, and Ser-382.

This sequence belongs to the eukaryotic release factor 1 family. Pelota subfamily. Component of the Pelota-HBS1L complex, also named Dom34-Hbs1 complex, composed of PELO and HBS1L. Interacts with PINK1. Interacts with ABCE1. Interacts with CNOT4. It depends on a divalent metal cation as a cofactor.

It is found in the cytoplasm. Its function is as follows. Component of the Pelota-HBS1L complex, a complex that recognizes stalled ribosomes and triggers the No-Go Decay (NGD) pathway. In the Pelota-HBS1L complex, PELO recognizes ribosomes stalled at the 3' end of an mRNA and engages stalled ribosomes by destabilizing mRNA in the mRNA channel. Following mRNA extraction from stalled ribosomes by the SKI complex, the Pelota-HBS1L complex promotes recruitment of ABCE1, which drives the disassembly of stalled ribosomes, followed by degradation of damaged mRNAs as part of the NGD pathway. As part of the PINK1-regulated signaling, upon mitochondrial damage is recruited to the ribosome/mRNA-ribonucleoprotein complex associated to mitochondrial outer membrane thereby enabling the recruitment of autophagy receptors and induction of mitophagy. This chain is Protein pelota homolog (PELO), found in Bos taurus (Bovine).